Consider the following 759-residue polypeptide: MGVLRLRVDGQTFRDPDNREITLRGINVAGEAKYPKKPDIPSYVSDGFFDADNVSFVGRPFSLDDAHTHFSRLRKWGYNTIRYVFTWEAIEHEGPGKYDDEWISFTIEVLRIAKQYGFYVFLDPHQDVWSRLSGGSGAPAWTLYAAGFDPRGFKKTEAALVQNTFDDPAEFPKMIWSTNYTRLVSQTMFTLFYGGRDFAPKAIIDGINIQDYLQGHFIAACRYFAQKIHEAGDIENEVVIGWESMNEPNRGLIGVQDISVIPPEQQLQLGTSPTAFQGMLTGSGRACEESTWAFGGFGPYQTGRELVDPEGETAWLPADYDDTRYGWVRDPGWKLGECLWAQHGVWDPSSDKLLRKDYFAKNPQTGEPLNYDKFTNTYFMEHYRAYRDALRSVWPEAIIFCQPPVMEVPPDLKGTVDDDPNMVHAVHYYDGITLLTKHWNRLYNVDVIGVLRGKYLTPAFAVKIGETAIRNCLRDQLKFLRDESLRYMGTHPLIFTEIGIPFDMDDRHAYKTGDYSGQVSAMDANHFAIEGSTANGFTLWLYTTSNNHEWGDNWNGEDLSIYSVDDLELPSGKLLAFENESQRDPQSPAYSESQRNTESYRVGPRDLKQALQAPSISSEISQSSQDKLGFRAAEAWVRPSPIITNGQILQYGFDLKSCVFSMRLLGEKKGLGQEAATEIFLPDFHFPDTHTVVAVSAGEWTIDYPEIHSVKFQRLRWWHPEGDHNIKIQGVKRKPGDPTVSGEELSYLEQCQGGGCSVM.

The active-site Proton donor is Glu-247. The Nucleophile role is filled by Glu-497. The disordered stretch occupies residues 576–600 (AFENESQRDPQSPAYSESQRNTESY). Polar residues predominate over residues 584 to 599 (DPQSPAYSESQRNTES).

The protein belongs to the glycosyl hydrolase 5 (cellulase A) family.

The protein localises to the membrane. It carries out the reaction a beta-D-glucosyl-(1&lt;-&gt;1')-N-acylsphing-4-enine + H2O = an N-acylsphing-4-enine + D-glucose. Its function is as follows. Specifically hydrolyzes the glucosidic linkage in glucosylceramide. May prevent accumulation of aberrent glucosylceramide containing immature ceramide. The protein is Glucosylceramidase of Aspergillus fumigatus (Neosartorya fumigata).